The following is a 961-amino-acid chain: MEAESSTPQERIPKLRHGRTSGPARRSTRGQWTAEEDEILRKAVHSFKGKNWKKIAEYFKDRTDVQCLHRWQKVLNPELVKGPWTKEEDEMIVQLIEKYGPKKWSTIARFLPGRIGKQCRERWHNHLNPAINKEAWTQEEELLLIRAHQIYGNRWAELTKFLPGRSDNGIKNHWHSSVKKKLDSYMSSGLLDQYQAMPLAPYERSSTLQSTFMQSNIDGNGCLNGQAENEIDSRQNSSMVGCSLSARDFQNGTINIGHDFHPCGNSQENEQTAYHSEQFYYPELEDISVSISEVSYDMEDCSQFPDHNVSTSPSQDYQFDFQELSDISLEMRHNMSEIPMPYTKESKESTLGAPNSTLNIDVATYTNSANVLTPETECCRVLFPDQESEGHSVSRSLTQEPNEFNQVDRRDPILYSSASDRQISEATKSPTQSSSSRFTATAASGKGTLRPAPLIISPDKYSKKSSGLICHPFEVEPKCTTNGNGSFICIGDPSSSTCVDEGTNNSSEEDQSYHVNDPKKLVPVNDFASLAEDRPHSLPKHEPNMTNEQHHEDMGASSSLGFPSFDLPVFNCDLLQSKNDPLHDYSPLGIRKLLMSTMTCMSPLRLWESPTGKKTLVGAQSILRKRTRDLLTPLSEKRSDKKLEIDIAASLAKDFSRLDVMFDETENRQSNFGNSTGVIHGDRENHFHILNGDGEEWSGKPSSLFSHRMPEETMHIRKSLEKVDQICMEANVREKDDSEQDVENVEFFSGILSEHNTGKPVLSTPGQSVTKAEKAQVSTPRNQLQRTLMATSNKEHHSPSSVCLVINSPSRARNKEGHLVDNGTSNENFSIFCGTPFRRGLESPSAWKSPFYINSLLPSPRFDTDLTIEDMGYIFSPGERSYESIGVMTQINEHTSAFAAFADAMEVSISPTNDDARQKKELDKENNDPLLAERRVLDFNDCESPIKATEEVSSYLLKGCR.

The segment at 1-33 (MEAESSTPQERIPKLRHGRTSGPARRSTRGQWT) is disordered. HTH myb-type domains follow at residues 24–75 (ARRS…QKVL), 76–131 (NPEL…NPAI), and 132–182 (NKEA…KKKL). DNA-binding regions (H-T-H motif) lie at residues 52–75 (WKKIAEYFKDRTDVQCLHRWQKVL), 104–127 (WSTIARFLPGRIGKQCRERWHNHL), and 155–178 (WAELTKFLPGRSDNGIKNHWHSSV). Disordered regions lie at residues 390-457 (GHSV…LIIS) and 534-555 (RPHSLPKHEPNMTNEQHHEDMG). Polar residues-rich tracts occupy residues 391-405 (HSVSRSLTQEPNEFN) and 416-430 (SSASDRQISEATKSP). The span at 431–444 (TQSSSSRFTATAAS) shows a compositional bias: low complexity. Over residues 534-554 (RPHSLPKHEPNMTNEQHHEDM) the composition is skewed to basic and acidic residues. A Nuclear localization signal motif is present at residues 612 to 619 (GKKTLVGA). The segment at 756-781 (NTGKPVLSTPGQSVTKAEKAQVSTPR) is disordered. Positions 764–781 (TPGQSVTKAEKAQVSTPR) are enriched in polar residues.

In terms of assembly, component of a DREAM-like complex which modulates a variety of developmentally regulated genes and of the mitotic genes in proliferating and differentiated cells. Associates with CDKA-1, RBR1 and E2FB, but not with E2FC, in proliferating cells, at early stages of leaves development. As to expression, expressed in roots, cotyledons and leaves, especially in vascular tissues, and in flowers.

It localises to the nucleus. In terms of biological role, transcription factor that binds 5'-AACGG-3' motifs in gene promoters. Involved in the regulation of cytokinesis, probably via the activation of several G2/M phase-specific genes transcription (e.g. KNOLLE). Required for the maintenance of diploidy. Its function is as follows. Involved in transcription regulation during induced endoreduplication at the powdery mildew (e.g. G.orontii) infection site, thus promoting G.orontii growth and reproduction. The polypeptide is Transcription factor MYB3R-4 (Arabidopsis thaliana (Mouse-ear cress)).